The chain runs to 118 residues: Small ribosomal subunit protein uS13 (118 aa).

The interval 94–118 is disordered; that stretch reads SLPLRGQRTKTNARTRKGPRKPIKK.

The protein belongs to the universal ribosomal protein uS13 family. Part of the 30S ribosomal subunit. Forms a loose heterodimer with protein S19. Forms two bridges to the 50S subunit in the 70S ribosome.

Functionally, located at the top of the head of the 30S subunit, it contacts several helices of the 16S rRNA. In the 70S ribosome it contacts the 23S rRNA (bridge B1a) and protein L5 of the 50S subunit (bridge B1b), connecting the 2 subunits; these bridges are implicated in subunit movement. Contacts the tRNAs in the A and P-sites. The sequence is that of Small ribosomal subunit protein uS13 from Colwellia psychrerythraea (strain 34H / ATCC BAA-681) (Vibrio psychroerythus).